Consider the following 332-residue polypeptide: UPF0158 protein TC_0713 (332 aa).

Disordered stretches follow at residues 196–215 (ALNP…KVEA) and 291–332 (LGYD…KARS). Residues 295 to 316 (GDGDASDFFGEEYDDDDDDDDD) show a composition bias toward acidic residues. Residues 320–332 (KKAAKRGRKKARS) show a composition bias toward basic residues.

It belongs to the UPF0158 family.

The sequence is that of UPF0158 protein TC_0713 from Chlamydia muridarum (strain MoPn / Nigg).